The following is a 132-amino-acid chain: Phosphoribosyl-ATP pyrophosphatase (132 aa).

It belongs to the PRA-PH family.

The protein localises to the cytoplasm. The catalysed reaction is 1-(5-phospho-beta-D-ribosyl)-ATP + H2O = 1-(5-phospho-beta-D-ribosyl)-5'-AMP + diphosphate + H(+). It functions in the pathway amino-acid biosynthesis; L-histidine biosynthesis; L-histidine from 5-phospho-alpha-D-ribose 1-diphosphate: step 2/9. The protein is Phosphoribosyl-ATP pyrophosphatase of Acidovorax sp. (strain JS42).